A 370-amino-acid polypeptide reads, in one-letter code: 3-isopropylmalate dehydrogenase (370 aa).

NAD(+) is bound at residue 77 to 90; that stretch reads GPKWDAVPYEVRPE. 4 residues coordinate substrate: R97, R107, R135, and D226. 3 residues coordinate Mg(2+): D226, D250, and D254. 290–302 serves as a coordination point for NAD(+); the sequence is GSAPDIAGTGVAN.

Belongs to the isocitrate and isopropylmalate dehydrogenases family. LeuB type 1 subfamily. As to quaternary structure, homodimer. The cofactor is Mg(2+). Requires Mn(2+) as cofactor.

It localises to the cytoplasm. It catalyses the reaction (2R,3S)-3-isopropylmalate + NAD(+) = 4-methyl-2-oxopentanoate + CO2 + NADH. Its pathway is amino-acid biosynthesis; L-leucine biosynthesis; L-leucine from 3-methyl-2-oxobutanoate: step 3/4. In terms of biological role, catalyzes the oxidation of 3-carboxy-2-hydroxy-4-methylpentanoate (3-isopropylmalate) to 3-carboxy-4-methyl-2-oxopentanoate. The product decarboxylates to 4-methyl-2 oxopentanoate. In Rhizobium meliloti (strain 1021) (Ensifer meliloti), this protein is 3-isopropylmalate dehydrogenase.